The primary structure comprises 407 residues: Accessory Sec system protein translocase subunit SecY2 (407 aa).

The next 10 helical transmembrane spans lie at 13 to 33 (FLWT…TLPF), 65 to 85 (LFSV…MFAV), 104 to 124 (MLLT…NLPL), 133 to 153 (TTIM…LIWL), 158 to 178 (AAMG…AYIP), 190 to 210 (ISSL…YLAV), 248 to 268 (IMYA…IHFL), 287 to 307 (PAWF…FAFI), 345 to 365 (FALV…MVVL), and 370 to 390 (YLRL…VFSI).

The protein belongs to the SecY/SEC61-alpha family. SecY2 subfamily. As to quaternary structure, component of the accessory SecA2/SecY2 protein translocase complex required to export cell wall proteins. May form heterotrimers with SecE and SecG subunits.

The protein resides in the cell membrane. Part of the accessory SecA2/SecY2 system specifically required for export of possible cell wall proteins. The central subunit of a protein translocation channel. The sequence is that of Accessory Sec system protein translocase subunit SecY2 from Streptococcus sanguinis (strain SK36).